Here is an 863-residue protein sequence, read N- to C-terminus: Dynamin-3 (863 aa).

In terms of domain architecture, Dynamin-type G spans Leu28–Pro294. The segment at Gly38–Ser45 is G1 motif. Gly38–Ser46 provides a ligand contact to GTP. The tract at residues Val64–Arg66 is G2 motif. A G3 motif region spans residues Asp136 to Gly139. The interval Thr205–Asp208 is G4 motif. Thr205–Asp211 lines the GTP pocket. Tyr231 carries the post-translational modification Phosphotyrosine. The tract at residues Val235–Ser238 is G5 motif. Asn236–Gln239 provides a ligand contact to GTP. Residue Lys299 is modified to N6-acetyllysine. Residues Gln515–Val621 form the PH domain. The residue at position 593 (Tyr593) is a Phosphotyrosine. At Lys594 the chain carries N6-acetyllysine. 2 disordered regions span residues Ser626–Pro647 and Ala742–Asp863. Polar residues predominate over residues Val627–Asn642. Residues Val653–Val744 form the GED domain. 2 positions are modified to phosphoserine: Ser763 and Ser767. Pro residues-rich tracts occupy residues Pro791–Pro816 and Pro826–Thr849. Ser847 carries the post-translational modification Phosphoserine.

This sequence belongs to the TRAFAC class dynamin-like GTPase superfamily. Dynamin/Fzo/YdjA family.

It localises to the cytoplasm. It is found in the cytoskeleton. It catalyses the reaction GTP + H2O = GDP + phosphate + H(+). In terms of biological role, microtubule-associated force-producing protein involved in producing microtubule bundles and able to bind and hydrolyze GTP. Most probably involved in vesicular trafficking processes, in particular endocytosis. In Mus musculus (Mouse), this protein is Dynamin-3 (Dnm3).